The following is a 451-amino-acid chain: Zinc metalloproteinase nas-16 (451 aa).

The 204-residue stretch at 70–273 (QVVTKLFSPQ…LTINTAYNCK (204 aa)) folds into the Peptidase M12A domain. 4 disulfide bridges follow: cysteine 127-cysteine 272, cysteine 148-cysteine 167, cysteine 274-cysteine 291, and cysteine 296-cysteine 305. The N-linked (GlcNAc...) asparagine glycan is linked to asparagine 133. Residue histidine 175 participates in Zn(2+) binding. The active site involves glutamate 176. The Zn(2+) site is built by histidine 179 and histidine 185. Positions 267–306 (NTAYNCKCPSELLCANGGYTNPSNCLECICPLGYGGVLCD) constitute an EGF-like domain. N-linked (GlcNAc...) asparagine glycosylation is found at asparagine 363 and asparagine 438.

The cofactor is Zn(2+).

The protein localises to the secreted. In terms of biological role, metalloprotease. In Caenorhabditis elegans, this protein is Zinc metalloproteinase nas-16 (nas-16).